Here is a 299-residue protein sequence, read N- to C-terminus: tRNA dimethylallyltransferase (299 aa).

Position 10-17 (10-17) interacts with ATP; sequence GPTAVGKT. Substrate is bound at residue 12 to 17; sequence TAVGKT. An interaction with substrate tRNA region spans residues 35-38; the sequence is DSQQ.

Belongs to the IPP transferase family. As to quaternary structure, monomer. The cofactor is Mg(2+).

The catalysed reaction is adenosine(37) in tRNA + dimethylallyl diphosphate = N(6)-dimethylallyladenosine(37) in tRNA + diphosphate. Catalyzes the transfer of a dimethylallyl group onto the adenine at position 37 in tRNAs that read codons beginning with uridine, leading to the formation of N6-(dimethylallyl)adenosine (i(6)A). The protein is tRNA dimethylallyltransferase of Streptococcus thermophilus (strain ATCC BAA-250 / LMG 18311).